Consider the following 266-residue polypeptide: Enterotoxin type C-1 (266 aa).

The first 27 residues, 1 to 27 (MNKSRFISCVILIFALILVLFTPNVLA), serve as a signal peptide directing secretion. A disulfide bridge connects residues Cys-120 and Cys-137.

Belongs to the staphylococcal/streptococcal toxin family. As to quaternary structure, interacts with host MHC class II molecules composed of alpha/HLA-DRA and beta/HLA-DRB1 chains.

The protein resides in the secreted. In terms of biological role, staphylococcal enterotoxin that activates the host immune system by binding as unprocessed molecules to major histocompatibility (MHC) complex class II and T-cell receptor (TCR) molecules. In turn, this ternary complex activates a large number of T-lymphocytes initiating a systemic release of pro-inflammatory cytokines. Inhibits SEC1-mediated T-cell activation in the absence of MHC class II by competing with SEC1 for binding to the host TCR. Also causes the intoxication staphylococcal food poisoning syndrome. The chain is Enterotoxin type C-1 (entC1) from Staphylococcus aureus.